The primary structure comprises 273 residues: uncharacterized protein (273 aa).

This is an uncharacterized protein from Acanthamoeba polyphaga mimivirus (APMV).